The chain runs to 218 residues: Octanoyltransferase (218 aa).

Residues 31 to 206 (EETPDEVWLV…ELVNLLGYEQ (176 aa)) enclose the BPL/LPL catalytic domain. Substrate-binding positions include 70-77 (RGGQVTYH), 137-139 (SLG), and 150-152 (GLA). The active-site Acyl-thioester intermediate is the Cys-168.

It belongs to the LipB family.

It is found in the cytoplasm. It catalyses the reaction octanoyl-[ACP] + L-lysyl-[protein] = N(6)-octanoyl-L-lysyl-[protein] + holo-[ACP] + H(+). Its pathway is protein modification; protein lipoylation via endogenous pathway; protein N(6)-(lipoyl)lysine from octanoyl-[acyl-carrier-protein]: step 1/2. Catalyzes the transfer of endogenously produced octanoic acid from octanoyl-acyl-carrier-protein onto the lipoyl domains of lipoate-dependent enzymes. Lipoyl-ACP can also act as a substrate although octanoyl-ACP is likely to be the physiological substrate. The sequence is that of Octanoyltransferase from Vibrio vulnificus (strain YJ016).